A 391-amino-acid polypeptide reads, in one-letter code: GDP-mannose transporter (391 aa).

The segment covering 1 to 11 (MDDKKNEDVEM) has biased composition (basic and acidic residues). Residues 1-28 (MDDKKNEDVEMRNFNGRSSPSQRDPFIS) are disordered. The Cytoplasmic portion of the chain corresponds to 1 to 44 (MDDKKNEDVEMRNFNGRSSPSQRDPFISKPGAAKRGGSSFDLSN). Residues 45 to 65 (VTNSPGISILAYCLASISMTV) form a helical membrane-spanning segment. The Lumenal portion of the chain corresponds to 66-75 (TNKYCVSGSN). The chain crosses the membrane as a helical span at residues 76–96 (WNLNFFYLAIQSVVCIIAIII). Over 97 to 115 (CKQAGLITNLAPFDTKKAK) the chain is Cytoplasmic. A helical membrane pass occupies residues 116-138 (TWFPISLLLVGMIYTSTKALQFL). Residues 139 to 141 (SVP) lie on the Lumenal side of the membrane. Residues 142–164 (VYTIFKNLTIIVIAYGEVLWFGG) traverse the membrane as a helical segment. The Cytoplasmic portion of the chain corresponds to 165 to 170 (SVTPSA). A helical transmembrane segment spans residues 171–193 (LFSFGLMVLSSVVAAWADIQHAL). Over 194 to 209 (YGGGATQTKEAADALS) the chain is Lumenal. A helical membrane pass occupies residues 210–230 (TLNAGYAWMGMNVFCTAAYVL). At 231–245 (SMRKVIKKMNFKDWD) the chain is on the cytoplasmic side. The helical transmembrane segment at 246 to 266 (TMFYNNLLTIPVLFVCSFVFE) threads the bilayer. N267 and N272 each carry an N-linked (GlcNAc...) asparagine glycan. The Lumenal portion of the chain corresponds to 267-284 (NWSSENLTKNFPLETRNN). The helical transmembrane segment at 285 to 305 (LILGMIYSGLATIFISYCSAW) threads the bilayer. Over 306–313 (CIRVTSST) the chain is Cytoplasmic. The helical transmembrane segment at 314-336 (TYSMVGALNKLPIAVSGLVFFAA) threads the bilayer. Residues 337 to 339 (PVT) lie on the Lumenal side of the membrane. Residues 340 to 359 (FGSVSAIFIGFVSGIVYAWA) form a helical membrane-spanning segment. Over 360 to 391 (KVRQNQSKGSVLPTTQPVMSASSQSNRDAAKA) the chain is Cytoplasmic. Positions 369–391 (SVLPTTQPVMSASSQSNRDAAKA) are disordered.

It belongs to the TPT transporter family. SLC35D subfamily. In terms of assembly, homooligomer.

The protein resides in the golgi apparatus membrane. The protein localises to the cytoplasmic vesicle membrane. It localises to the endoplasmic reticulum membrane. Involved in the import of GDP-mannose from the cytoplasm into the Golgi lumen. The protein is GDP-mannose transporter (vrg4) of Sclerotinia sclerotiorum (strain ATCC 18683 / 1980 / Ss-1) (White mold).